Consider the following 114-residue polypeptide: Ribosome-binding factor A (114 aa).

It belongs to the RbfA family. In terms of assembly, monomer. Binds 30S ribosomal subunits, but not 50S ribosomal subunits or 70S ribosomes.

The protein localises to the cytoplasm. Its function is as follows. One of several proteins that assist in the late maturation steps of the functional core of the 30S ribosomal subunit. Associates with free 30S ribosomal subunits (but not with 30S subunits that are part of 70S ribosomes or polysomes). Required for efficient processing of 16S rRNA. May interact with the 5'-terminal helix region of 16S rRNA. This chain is Ribosome-binding factor A, found in Macrococcus caseolyticus (strain JCSC5402) (Macrococcoides caseolyticum).